The sequence spans 421 residues: Heterogeneous nuclear ribonucleoprotein 27C (421 aa).

RRM domains are found at residues 7 to 88 (GKLF…RTLQ) and 96 to 173 (YKVF…KAEP). Disordered regions lie at residues 171-191 (AEPR…GGAY) and 240-373 (GTSP…SEYD). Ser177 is modified (phosphoserine). Residues 240-250 (GTSPQQQQYGY) are compositionally biased toward polar residues. Over residues 264-273 (PPGPQGPPPQ) the composition is skewed to pro residues. The span at 275 to 284 (SNYAGPQQTQ) shows a compositional bias: polar residues. Positions 293-302 (NSTSTGAPSG) are enriched in low complexity. Phosphoserine occurs at positions 366, 368, and 370. Tyr372 is modified (phosphotyrosine). Ser379 is modified (phosphoserine). Residues 392–421 (EGASNYGAGPRSAYGNDSSTQPPYATSQAV) form a disordered region. Polar residues predominate over residues 406 to 421 (GNDSSTQPPYATSQAV).

As to quaternary structure, interacts with sqd; the interaction is RNA-dependent and may be specific for sqd isoform A/sqdA. Interacts with otu; the interaction is RNA-independent.

The protein resides in the nucleus. Its subcellular location is the cytoplasm. Its function is as follows. This protein is a component of ribonucleosomes. Could be needed to organize a concentration gradient of a dorsalizing morphogen (Dm) originating in the germinal vesicle. Interacts with grk mRNA (via 3' UTR) and involved in its localization to the dorsal anterior region of the oocyte during dorsal-ventral axis determination; may function as a ribonuclear protein complex together with sqd and otu. Required for polytene chromosome dispersal in nurse cells during oogenesis. May be involved in the regulation of splicing. The chain is Heterogeneous nuclear ribonucleoprotein 27C from Drosophila melanogaster (Fruit fly).